The following is a 207-amino-acid chain: GTP cyclohydrolase-2 (207 aa).

Residue 49–53 participates in GTP binding; it reads RTHSE. C54, C65, and C67 together coordinate Zn(2+). GTP contacts are provided by residues Q70, 92-94, and T114; that span reads EGR. Catalysis depends on D126, which acts as the Proton acceptor. The active-site Nucleophile is R128. Residues T149 and K154 each coordinate GTP.

Belongs to the GTP cyclohydrolase II family. Zn(2+) is required as a cofactor.

It catalyses the reaction GTP + 4 H2O = 2,5-diamino-6-hydroxy-4-(5-phosphoribosylamino)-pyrimidine + formate + 2 phosphate + 3 H(+). It participates in cofactor biosynthesis; riboflavin biosynthesis; 5-amino-6-(D-ribitylamino)uracil from GTP: step 1/4. Its function is as follows. Catalyzes the conversion of GTP to 2,5-diamino-6-ribosylamino-4(3H)-pyrimidinone 5'-phosphate (DARP), formate and pyrophosphate. In Hahella chejuensis (strain KCTC 2396), this protein is GTP cyclohydrolase-2.